The following is a 372-amino-acid chain: tRNA-specific 2-thiouridylase MnmA (372 aa).

Residues 11-18 (GMSGGVDS) and Met37 contribute to the ATP site. An interaction with target base in tRNA region spans residues 97–99 (NPD). The active-site Nucleophile is the Cys102. A disulfide bridge links Cys102 with Cys199. ATP is bound at residue Gly126. Positions 149–151 (KDQ) are interaction with tRNA. Cys199 functions as the Cysteine persulfide intermediate in the catalytic mechanism. The interval 309-310 (RY) is interaction with tRNA.

This sequence belongs to the MnmA/TRMU family.

The protein resides in the cytoplasm. The catalysed reaction is S-sulfanyl-L-cysteinyl-[protein] + uridine(34) in tRNA + AH2 + ATP = 2-thiouridine(34) in tRNA + L-cysteinyl-[protein] + A + AMP + diphosphate + H(+). Catalyzes the 2-thiolation of uridine at the wobble position (U34) of tRNA, leading to the formation of s(2)U34. The protein is tRNA-specific 2-thiouridylase MnmA of Staphylococcus aureus (strain MSSA476).